We begin with the raw amino-acid sequence, 227 residues long: ATP synthase F(0) complex subunit a (227 aa).

6 helical membrane-spanning segments follow: residues 9 to 29, 69 to 89, 98 to 118, 132 to 152, 165 to 185, and 190 to 210; these read FASP…LPWV, WALL…LGLL, QLSL…IIGM, EGTP…SLFI, LTAG…LMPM, and AILT…VAMI.

This sequence belongs to the ATPase A chain family. As to quaternary structure, component of the ATP synthase complex composed at least of ATP5F1A/subunit alpha, ATP5F1B/subunit beta, ATP5MC1/subunit c (homooctomer), MT-ATP6/subunit a, MT-ATP8/subunit 8, ATP5ME/subunit e, ATP5MF/subunit f, ATP5MG/subunit g, ATP5MK/subunit k, ATP5MJ/subunit j, ATP5F1C/subunit gamma, ATP5F1D/subunit delta, ATP5F1E/subunit epsilon, ATP5PF/subunit F6, ATP5PB/subunit b, ATP5PD/subunit d, ATP5PO/subunit OSCP. ATP synthase complex consists of a soluble F(1) head domain (subunits alpha(3) and beta(3)) - the catalytic core - and a membrane F(0) domain - the membrane proton channel (subunits c, a, 8, e, f, g, k and j). These two domains are linked by a central stalk (subunits gamma, delta, and epsilon) rotating inside the F1 region and a stationary peripheral stalk (subunits F6, b, d, and OSCP). Interacts with DNAJC30; interaction is direct.

The protein resides in the mitochondrion inner membrane. The catalysed reaction is H(+)(in) = H(+)(out). In terms of biological role, subunit a, of the mitochondrial membrane ATP synthase complex (F(1)F(0) ATP synthase or Complex V) that produces ATP from ADP in the presence of a proton gradient across the membrane which is generated by electron transport complexes of the respiratory chain. ATP synthase complex consist of a soluble F(1) head domain - the catalytic core - and a membrane F(1) domain - the membrane proton channel. These two domains are linked by a central stalk rotating inside the F(1) region and a stationary peripheral stalk. During catalysis, ATP synthesis in the catalytic domain of F(1) is coupled via a rotary mechanism of the central stalk subunits to proton translocation. With the subunit c (ATP5MC1), forms the proton-conducting channel in the F(0) domain, that contains two crucial half-channels (inlet and outlet) that facilitate proton movement from the mitochondrial intermembrane space (IMS) into the matrix. Protons are taken up via the inlet half-channel and released through the outlet half-channel, following a Grotthuss mechanism. This chain is ATP synthase F(0) complex subunit a, found in Carassius auratus (Goldfish).